The primary structure comprises 142 residues: Large ribosomal subunit protein uL11 (142 aa).

The protein belongs to the universal ribosomal protein uL11 family. As to quaternary structure, part of the ribosomal stalk of the 50S ribosomal subunit. Interacts with L10 and the large rRNA to form the base of the stalk. L10 forms an elongated spine to which L12 dimers bind in a sequential fashion forming a multimeric L10(L12)X complex. One or more lysine residues are methylated.

Its function is as follows. Forms part of the ribosomal stalk which helps the ribosome interact with GTP-bound translation factors. The chain is Large ribosomal subunit protein uL11 from Mycolicibacterium vanbaalenii (strain DSM 7251 / JCM 13017 / BCRC 16820 / KCTC 9966 / NRRL B-24157 / PYR-1) (Mycobacterium vanbaalenii).